A 616-amino-acid polypeptide reads, in one-letter code: Prolactin receptor (616 aa).

The N-terminal stretch at 1–24 is a signal peptide; that stretch reads MKENVASMIVFLLLLFLNIRLLKG. Topologically, residues 25–234 are extracellular; the sequence is QSPPGKPFIF…QIPNDFTMKD (210 aa). Fibronectin type-III domains lie at 27–128 and 129–229; these read PPGK…VEPD and PPVN…IPND. A disulfide bridge connects residues Cys-36 and Cys-46. N-linked (GlcNAc...) asparagine glycosylation occurs at Asn-59. Residues Cys-75 and Cys-86 are joined by a disulfide bond. N-linked (GlcNAc...) asparagine glycosylation is found at Asn-104 and Asn-132. Zn(2+)-binding residues include Asp-211 and His-212. Residues 215–219 carry the WSXWS motif motif; sequence WSVWS. A helical membrane pass occupies residues 235-258; that stretch reads ITVWIFVAVLSTIICLIMVWAVAL. Residues 259 to 616 are Cytoplasmic-facing; it reads KGYSMVTCIF…DPACFMHSLH (358 aa). A Box 1 motif motif is present at residues 267-275; it reads IFPPVPGPK. Disordered stretches follow at residues 326–375, 454–492, and 568–593; these read MPAH…STFH, QSSKTTEAAGEEKATKQREVESSHSKAEQDTGWLLPKEK, and ESTKEAPPSPSQNQAEKDLSSFSTAP. Residues 463 to 482 are compositionally biased toward basic and acidic residues; sequence GEEKATKQREVESSHSKAEQ.

This sequence belongs to the type I cytokine receptor family. Type 1 subfamily. Interacts with SMARCA1. Interacts with NEK3 and VAV2 and this interaction is prolactin-dependent.

It localises to the membrane. In terms of biological role, this is a receptor for the anterior pituitary hormone prolactin. The sequence is that of Prolactin receptor (PRLR) from Oryctolagus cuniculus (Rabbit).